The chain runs to 322 residues: MPVPGITVETILRDHDDLQLQLVTGEVGLSNRINSAEINRPGLSLTGFFDFFANDRIQILGKGEWAYLNSLSEEKLGEITDKFFEFHLNCIIYTHGNEPQVPFVERAKEKGIPLFKTEIATHRFITLISQILDRALAPRTMRHGVLIEVFGIGTLLTGRSGVGKSETALELIERGHRLVADDMVEIRRLSESYLIGSCSDLLRHHMEIRGLGILNIKDLFGVGSVRDHKLIELIINLKEWEEQTSGDYERTGIEQSMEEILGVSVPYIEIPVKPGRNIPIIVETAAMNQRLRKMGKNSAKEFSNKLNTYIQQSSIETNPIKD.

Active-site residues include His143 and Lys164. ATP is bound at residue 158-165; it reads GRSGVGKS. Ser165 lines the Mg(2+) pocket. The active-site Proton acceptor; for phosphorylation activity. Proton donor; for dephosphorylation activity is Asp182. The segment at 206 to 215 is important for the catalytic mechanism of both phosphorylation and dephosphorylation; sequence MEIRGLGILN. Position 207 (Glu207) interacts with Mg(2+). Arg250 is a catalytic residue. The interval 271 to 276 is important for the catalytic mechanism of dephosphorylation; sequence PVKPGR.

This sequence belongs to the HPrK/P family. In terms of assembly, homohexamer. The cofactor is Mg(2+).

It catalyses the reaction [HPr protein]-L-serine + ATP = [HPr protein]-O-phospho-L-serine + ADP + H(+). The enzyme catalyses [HPr protein]-O-phospho-L-serine + phosphate + H(+) = [HPr protein]-L-serine + diphosphate. Catalyzes the ATP- as well as the pyrophosphate-dependent phosphorylation of a specific serine residue in HPr, a phosphocarrier protein of the phosphoenolpyruvate-dependent sugar phosphotransferase system (PTS). HprK/P also catalyzes the pyrophosphate-producing, inorganic phosphate-dependent dephosphorylation (phosphorolysis) of seryl-phosphorylated HPr (P-Ser-HPr). This Leptospira biflexa serovar Patoc (strain Patoc 1 / Ames) protein is HPr kinase/phosphorylase.